Reading from the N-terminus, the 206-residue chain is Small ribosomal subunit protein uS4 (206 aa).

The 61-residue stretch at 96-156 folds into the S4 RNA-binding domain; it reads GRLDNVVYRM…EKSKNQLRIQ (61 aa).

Belongs to the universal ribosomal protein uS4 family. Part of the 30S ribosomal subunit. Contacts protein S5. The interaction surface between S4 and S5 is involved in control of translational fidelity.

Its function is as follows. One of the primary rRNA binding proteins, it binds directly to 16S rRNA where it nucleates assembly of the body of the 30S subunit. Functionally, with S5 and S12 plays an important role in translational accuracy. The polypeptide is Small ribosomal subunit protein uS4 (Saccharophagus degradans (strain 2-40 / ATCC 43961 / DSM 17024)).